The chain runs to 171 residues: Shikimate kinase (171 aa).

Position 14-19 (14-19) interacts with ATP; the sequence is GAGKST. S18 serves as a coordination point for Mg(2+). 3 residues coordinate substrate: D36, R60, and G82. R120 is an ATP binding site. R139 contacts substrate. Q156 contacts ATP.

The protein belongs to the shikimate kinase family. Monomer. Mg(2+) serves as cofactor.

The protein localises to the cytoplasm. It catalyses the reaction shikimate + ATP = 3-phosphoshikimate + ADP + H(+). It participates in metabolic intermediate biosynthesis; chorismate biosynthesis; chorismate from D-erythrose 4-phosphate and phosphoenolpyruvate: step 5/7. Its function is as follows. Catalyzes the specific phosphorylation of the 3-hydroxyl group of shikimic acid using ATP as a cosubstrate. This Shewanella baltica (strain OS195) protein is Shikimate kinase.